Here is a 238-residue protein sequence, read N- to C-terminus: Opacity protein opA66 (238 aa).

Residue alanine 1 is a signal peptide. Disordered regions lie at residues 88–109 (NLQR…QENG) and 162–183 (GARG…AHQE). Residues 168 to 183 (PTVSSPYKNTQDAHQE) are compositionally biased toward polar residues.

This sequence belongs to the opacity porin family.

It localises to the cell outer membrane. In terms of biological role, implicated in a number of adherence functions. OPA proteins are implicated in pathogenesis and are subject to phase variation. In Neisseria gonorrhoeae, this protein is Opacity protein opA66.